A 130-amino-acid polypeptide reads, in one-letter code: Small ribosomal subunit protein uS9 (130 aa).

The protein belongs to the universal ribosomal protein uS9 family.

The polypeptide is Small ribosomal subunit protein uS9 (Burkholderia ambifaria (strain MC40-6)).